Reading from the N-terminus, the 251-residue chain is Triosephosphate isomerase (251 aa).

Residue 9–11 participates in substrate binding; it reads NWK. The active-site Electrophile is the histidine 96. Catalysis depends on glutamate 168, which acts as the Proton acceptor. Substrate is bound by residues glycine 174, serine 214, and 235–236; that span reads GG.

The protein belongs to the triosephosphate isomerase family. In terms of assembly, homodimer.

It is found in the cytoplasm. The enzyme catalyses D-glyceraldehyde 3-phosphate = dihydroxyacetone phosphate. The protein operates within carbohydrate biosynthesis; gluconeogenesis. It functions in the pathway carbohydrate degradation; glycolysis; D-glyceraldehyde 3-phosphate from glycerone phosphate: step 1/1. Its function is as follows. Involved in the gluconeogenesis. Catalyzes stereospecifically the conversion of dihydroxyacetone phosphate (DHAP) to D-glyceraldehyde-3-phosphate (G3P). The protein is Triosephosphate isomerase of Cytophaga hutchinsonii (strain ATCC 33406 / DSM 1761 / CIP 103989 / NBRC 15051 / NCIMB 9469 / D465).